A 638-amino-acid polypeptide reads, in one-letter code: Ubiquitin-associated and SH3 domain-containing protein B (638 aa).

Serine 9 is modified (phosphoserine). Threonine 12 bears the Phosphothreonine mark. One can recognise a UBA domain in the interval 23 to 65 (TVKHGSALDVLLSMGFPRARAQKALASTGGRSVQAACDWLFSH). The SH3 domain maps to 243–308 (ANHETLQVIY…PENYITKADE (66 aa)). Residues 369-638 (GPQKRCLFVC…FNWRETLLQE (270 aa)) form a protein tyrosine phosphatase region. The active site involves arginine 379. Histidine 380 serves as the catalytic Tele-phosphohistidine intermediate. Histidine 565 is an active-site residue.

As to quaternary structure, homodimer. Interacts with JAK2 (in vitro). Interacts with CBL. Part of a complex containing CBL and activated EGFR. Interacts with ubiquitin and with mono-ubiquitinated proteins. Interacts with ZAP70 (ubiquitinated form). Detected in splenic T-cells and B-cells, total spleen, skeletal muscle, heart, lung, kidney, thymus, brain and liver (at protein level). Highly expressed in brain. Detected in heart, spleen, lung, liver, kidney and testis.

It is found in the cytoplasm. The protein resides in the nucleus. The catalysed reaction is O-phospho-L-tyrosyl-[protein] + H2O = L-tyrosyl-[protein] + phosphate. Its function is as follows. Interferes with CBL-mediated down-regulation and degradation of receptor-type tyrosine kinases. Promotes accumulation of activated target receptors, such as T-cell receptors and EGFR, on the cell surface. Exhibits tyrosine phosphatase activity toward several substrates including EGFR, FAK, SYK, and ZAP70. Down-regulates proteins that are dually modified by both protein tyrosine phosphorylation and ubiquitination. The polypeptide is Ubiquitin-associated and SH3 domain-containing protein B (Ubash3b) (Mus musculus (Mouse)).